The sequence spans 363 residues: Adenosine deaminase (363 aa).

Residues His42 and His44 each coordinate Zn(2+). Residues 44-46, Asp172, and Gly201 each bind a purine D-ribonucleoside; that span reads HLD. The interval 170-184 is gating helix loop; regulates binding affinity for substrates and thus substrate selectivity; sequence IGDTGHRAADIKASA. His226 contacts Zn(2+). The a purine D-ribonucleoside site is built by Glu229, His253, and Asp310. Asp310 serves as a coordination point for Zn(2+).

The protein belongs to the metallo-dependent hydrolases superfamily. Adenosine and AMP deaminases family. The cofactor is Zn(2+).

It carries out the reaction adenosine + H2O + H(+) = inosine + NH4(+). It catalyses the reaction S-methyl-5'-thioadenosine + H2O + H(+) = S-methyl-5'-thioinosine + NH4(+). It participates in purine metabolism; purine nucleoside salvage. Its activity is regulated as follows. Inhibited by coformycin and methylthiocoformycin (MT-coformycin). Functionally, catalyzes the hydrolytic deamination of adenosine to produce inosine. Unlike mammalian adenosine deaminases, also catalyzes the deamination of 5'-methylthioadenosine (MTA), a by-product of polyamine biosynthesis, to produce 5'-methylthioinosine (MTI). Plays an essential role in the purine salvage pathway which allows the parasite to use host cell purines for the synthesis of nucleic acids. This chain is Adenosine deaminase, found in Plasmodium knowlesi.